We begin with the raw amino-acid sequence, 167 residues long: Translationally-controlled tumor protein homolog (167 aa).

Positions 1 to 167 constitute a TCTP domain; it reads MIIFKDVISN…WKHGIKEEKI (167 aa).

Belongs to the TCTP family.

Its subcellular location is the cytoplasm. The protein resides in the cytoskeleton. Involved in protein synthesis. Involved in microtubule stabilization. The protein is Translationally-controlled tumor protein homolog of Yarrowia lipolytica (strain CLIB 122 / E 150) (Yeast).